A 1121-amino-acid chain; its full sequence is RecBCD enzyme subunit RecC (1121 aa).

Belongs to the RecC family. Heterotrimer of RecB, RecC and RecD. All subunits contribute to DNA-binding.

Its function is as follows. A helicase/nuclease that prepares dsDNA breaks (DSB) for recombinational DNA repair. Binds to DSBs and unwinds DNA via a highly rapid and processive ATP-dependent bidirectional helicase activity. Unwinds dsDNA until it encounters a Chi (crossover hotspot instigator) sequence from the 3' direction. Cuts ssDNA a few nucleotides 3' to the Chi site. The properties and activities of the enzyme are changed at Chi. The Chi-altered holoenzyme produces a long 3'-ssDNA overhang and facilitates RecA-binding to the ssDNA for homologous DNA recombination and repair. Holoenzyme degrades any linearized DNA that is unable to undergo homologous recombination. In the holoenzyme this subunit recognizes the wild-type Chi sequence, and when added to isolated RecB increases its ATP-dependent helicase processivity. The protein is RecBCD enzyme subunit RecC of Haemophilus influenzae (strain ATCC 51907 / DSM 11121 / KW20 / Rd).